A 562-amino-acid polypeptide reads, in one-letter code: Long-chain-fatty-acid--CoA ligase (562 aa).

The protein belongs to the ATP-dependent AMP-binding enzyme family. Mg(2+) serves as cofactor.

It is found in the membrane. It catalyses the reaction a long-chain fatty acid + ATP + CoA = a long-chain fatty acyl-CoA + AMP + diphosphate. The protein operates within lipid metabolism; fatty acid beta-oxidation. Its function is as follows. Catalyzes the esterification, concomitant with transport, of exogenous long-chain fatty acids into metabolically active CoA thioesters for subsequent degradation or incorporation into phospholipids. The chain is Long-chain-fatty-acid--CoA ligase (fadD) from Haemophilus influenzae (strain ATCC 51907 / DSM 11121 / KW20 / Rd).